A 140-amino-acid chain; its full sequence is uncharacterized protein (140 aa).

Positions 2 to 140 (KAVIAKNEEQ…GIPHLQMMKD (139 aa)) constitute an N-acetyltransferase domain.

It belongs to the acetyltransferase family.

This is an uncharacterized protein from Bacillus subtilis (strain 168).